Consider the following 211-residue polypeptide: Claudin-1 (211 aa).

Residues 1–7 (MANAGLQ) are Cytoplasmic-facing. A helical membrane pass occupies residues 8-28 (LLGFILASLGWIGSIVSTALP). At 29-81 (QWKIYSYAGDNIVTAQAIYEGLWMSCVSQSTGQIQCKVFDSLLNLNSTLQATR) the chain is on the extracellular side. The cysteines at positions 54 and 64 are disulfide-linked. The helical transmembrane segment at 82 to 102 (ALMVIGILLGLIAIFVSTIGM) threads the bilayer. Residues 103–115 (KCMRCLEDDEVQK) are Cytoplasmic-facing. Residues 116–136 (MWMAVIGGIIFVISGLATLVA) form a helical membrane-spanning segment. The Extracellular portion of the chain corresponds to 137–163 (TAWYGNRIVQEFYDPMTPVNARYEFGQ). The chain crosses the membrane as a helical span at residues 164–184 (ALFTGWAAASLCLLGGALLSC). The Cytoplasmic segment spans residues 185-211 (SCPRKTTSYPTPRPYPKPTPSSGKDYV). Positions 190–211 (TTSYPTPRPYPKPTPSSGKDYV) are disordered. The segment at 210–211 (YV) is interactions with TJP1, TJP2, TJP3 and PATJ.

The protein belongs to the claudin family. Can form homo- and heteropolymers with other CLDN. Homopolymers interact with CLDN3, but not CLDN2, homopolymers. Directly interacts with TJP1/ZO-1, TJP2/ZO-2 and TJP3/ZO-3. Interacts with MPDZ and PATJ. Interacts with OCLN, CD81, CLDN4, CLDN6 and CLDN9. As to expression, detected in epididymis (at protein level). Detected in testis and epididymis.

The protein localises to the cell junction. It localises to the tight junction. Its subcellular location is the cell membrane. The protein resides in the basolateral cell membrane. Its function is as follows. Claudins function as major constituents of the tight junction complexes that regulate the permeability of epithelia. While some claudin family members play essential roles in the formation of impermeable barriers, others mediate the permeability to ions and small molecules. Often, several claudin family members are coexpressed and interact with each other, and this determines the overall permeability. CLDN1 is required to prevent the paracellular diffusion of small molecules through tight junctions in the epidermis and is required for the normal barrier function of the skin. Required for normal water homeostasis and to prevent excessive water loss through the skin, probably via an indirect effect on the expression levels of other proteins, since CLDN1 itself seems to be dispensable for water barrier formation in keratinocyte tight junctions. This Rattus norvegicus (Rat) protein is Claudin-1 (Cldn1).